Here is an 88-residue protein sequence, read N- to C-terminus: Phosphocarrier protein HPr (88 aa).

In terms of domain architecture, HPr spans 1–88; sequence MEQNSYVIID…DVLSKEGLTK (88 aa). His-15 functions as the Pros-phosphohistidine intermediate in the catalytic mechanism. At Ser-46 the chain carries Phosphoserine; by HPrK/P.

It localises to the cytoplasm. Its activity is regulated as follows. Phosphorylation on Ser-46 inhibits the phosphoryl transfer from enzyme I to HPr. Functionally, general (non sugar-specific) component of the phosphoenolpyruvate-dependent sugar phosphotransferase system (sugar PTS). This major carbohydrate active-transport system catalyzes the phosphorylation of incoming sugar substrates concomitantly with their translocation across the cell membrane. The phosphoryl group from phosphoenolpyruvate (PEP) is transferred to the phosphoryl carrier protein HPr by enzyme I. Phospho-HPr then transfers it to the PTS EIIA domain. In terms of biological role, P-Ser-HPr interacts with the catabolite control protein A (CcpA), forming a complex that binds to DNA at the catabolite response elements cre, operator sites preceding a large number of catabolite-regulated genes. Thus, P-Ser-HPr is a corepressor in carbon catabolite repression (CCR), a mechanism that allows bacteria to coordinate and optimize the utilization of available carbon sources. P-Ser-HPr also plays a role in inducer exclusion, in which it probably interacts with several non-PTS permeases and inhibits their transport activity. This is Phosphocarrier protein HPr (ptsH) from Staphylococcus aureus (strain MSSA476).